Here is an 843-residue protein sequence, read N- to C-terminus: OTU domain-containing protein 7B (843 aa).

Residues 50–88 form a disordered region; that stretch reads GNLPPSFSEGSGGSRTPEKGFSDREPTRPPRPILQRQDD. Positions 65-77 are enriched in basic and acidic residues; the sequence is TPEKGFSDREPTR. S100 is subject to Phosphoserine. Positions 152-401 are TRAF-binding; sequence ERDLIEQSML…AVDPGKGWEW (250 aa). Residues 167-440 form a catalytic region; that stretch reads AGRLNWWVSV…VKWIPLSSDA (274 aa). Positions 183 to 365 constitute an OTU domain; the sequence is LLPLATTGDG…QAHFSALVSM (183 aa). Residues 187–193 form a regulatory loop region; that stretch reads ATTGDGN. D191 is a catalytic residue. The Nucleophile role is filled by C194. The active-site Proton acceptor is H358. 2 disordered regions span residues 442–587 and 652–711; these read APLA…GGSK and IMNG…CQEP. 2 stretches are compositionally biased toward basic and acidic residues: residues 456–471 and 488–500; these read DEPR…DKES and SKRD…KRAD. Residues S464, S467, and S471 each carry the phosphoserine modification. The Nuclear localization signal signature appears at 483 to 498; that stretch reads RRKEKSKRDREKDKKR. A compositionally biased stretch (gly residues) spans 531 to 543; sequence KPGGVGTGLGGSS. The segment covering 665–675 has biased composition (basic and acidic residues); the sequence is KKPEPDAREEQ. T729 is subject to Phosphothreonine. Residues 732–792 are disordered; the sequence is RQCPPGRPYP…PEPDGWAGGL (61 aa). Residues 796–831 form an A20-type zinc finger; sequence PPTQTKCKQPNCSFYGHPETNNFCSCCYREELRRRE. Zn(2+) contacts are provided by C802, C807, C819, and C822.

Belongs to the peptidase C64 family. In terms of assembly, interacts with ZAP70 in activated T cells, but not in resting T cells. Interacts with TRAF3. Interacts with TRAF6. Interacts with PARK7, leading to inhibit deubiquitinase activity. Interacts with EGFR, ITCH and NEDD4. Post-translationally, phosphorylated by EGFR. In terms of tissue distribution, widely expressed. Abundant in kidney, heart and fetal liver. Expressed differentially among B-cells at distinct developmental stages. Higher expression seen in primary immature B-cells as compared to the mature cells.

The protein localises to the cytoplasm. It localises to the nucleus. It catalyses the reaction Thiol-dependent hydrolysis of ester, thioester, amide, peptide and isopeptide bonds formed by the C-terminal Gly of ubiquitin (a 76-residue protein attached to proteins as an intracellular targeting signal).. Deubiquitinase activity is inhibited following interaction with PARK7. Its function is as follows. Negative regulator of the non-canonical NF-kappa-B pathway that acts by mediating deubiquitination of TRAF3, an inhibitor of the NF-kappa-B pathway, thereby acting as a negative regulator of B-cell responses. In response to non-canonical NF-kappa-B stimuli, deubiquitinates 'Lys-48'-linked polyubiquitin chains of TRAF3, preventing TRAF3 proteolysis and over-activation of non-canonical NF-kappa-B. Negatively regulates mucosal immunity against infections. Deubiquitinates ZAP70, and thereby regulates T cell receptor (TCR) signaling that leads to the activation of NF-kappa-B. Plays a role in T cell homeostasis and is required for normal T cell responses, including production of IFNG and IL2. Mediates deubiquitination of EGFR. Has deubiquitinating activity toward 'Lys-11', 'Lys-48' and 'Lys-63'-linked polyubiquitin chains. Has a much higher catalytic rate with 'Lys-11'-linked polyubiquitin chains (in vitro); however the physiological significance of these data are unsure. Hydrolyzes both linear and branched forms of polyubiquitin. Acts as a regulator of mTORC1 and mTORC2 assembly by mediating 'Lys-63'-linked deubiquitination of MLST8, thereby promoting assembly of the mTORC2 complex, while inibiting formation of the mTORC1 complex. The chain is OTU domain-containing protein 7B (OTUD7B) from Homo sapiens (Human).